The primary structure comprises 256 residues: GDSL esterase/lipase CPRD49 (256 aa).

The N-terminal stretch at 1–27 is a signal peptide; the sequence is MVGPARPQIVLFGSSIVQMSFGHGGWG. S15 acts as the Nucleophile in catalysis. 2 N-linked (GlcNAc...) asparagine glycosylation sites follow: N49 and N79. Residue H213 is part of the active site. N243 carries N-linked (GlcNAc...) asparagine glycosylation.

The protein belongs to the 'GDSL' lipolytic enzyme family. As to expression, specifically expressed in anthers (stages 8-12).

The protein localises to the secreted. The sequence is that of GDSL esterase/lipase CPRD49 (CPRD49) from Arabidopsis thaliana (Mouse-ear cress).